The primary structure comprises 158 residues: Transcription elongation factor GreA (158 aa).

Positions 45–72 (AEYHAAREQQSFIEGRIKQLEGELSHAE) form a coiled coil.

This sequence belongs to the GreA/GreB family.

In terms of biological role, necessary for efficient RNA polymerase transcription elongation past template-encoded arresting sites. The arresting sites in DNA have the property of trapping a certain fraction of elongating RNA polymerases that pass through, resulting in locked ternary complexes. Cleavage of the nascent transcript by cleavage factors such as GreA or GreB allows the resumption of elongation from the new 3'terminus. GreA releases sequences of 2 to 3 nucleotides. This is Transcription elongation factor GreA from Xylella fastidiosa (strain M12).